Reading from the N-terminus, the 315-residue chain is KH domain-containing protein At5g56140 (315 aa).

2 disordered regions span residues 1-53 (MMMM…GGLR) and 136-158 (SQFP…SPGS). Positions 7–28 (LGGGGGGGGGSGGGIGGGGGGR) are enriched in gly residues. Composition is skewed to polar residues over residues 31–53 (TYSS…GGLR) and 136–146 (SQFPSERSVPS). Residues 171-238 (DIPVDNYPNF…EHLNEPLHIL (68 aa)) enclose the KH domain. The disordered stretch occupies residues 289–315 (REEGSPMSGSVSPYNSLGMKRAKTREG). Position 300 is a phosphoserine (serine 300).

It localises to the nucleus. In Arabidopsis thaliana (Mouse-ear cress), this protein is KH domain-containing protein At5g56140.